We begin with the raw amino-acid sequence, 528 residues long: ATP synthase subunit alpha 1 (528 aa).

Residue 177–184 (GDRQTGKT) coordinates ATP.

The protein belongs to the ATPase alpha/beta chains family. F-type ATPases have 2 components, CF(1) - the catalytic core - and CF(0) - the membrane proton channel. CF(1) has five subunits: alpha(3), beta(3), gamma(1), delta(1), epsilon(1). CF(0) has three main subunits: a(1), b(2) and c(9-12). The alpha and beta chains form an alternating ring which encloses part of the gamma chain. CF(1) is attached to CF(0) by a central stalk formed by the gamma and epsilon chains, while a peripheral stalk is formed by the delta and b chains.

The protein resides in the cell inner membrane. The catalysed reaction is ATP + H2O + 4 H(+)(in) = ADP + phosphate + 5 H(+)(out). Its function is as follows. Produces ATP from ADP in the presence of a proton gradient across the membrane. The alpha chain is a regulatory subunit. The sequence is that of ATP synthase subunit alpha 1 from Pseudoalteromonas atlantica (strain T6c / ATCC BAA-1087).